Reading from the N-terminus, the 350-residue chain is MSTVQTVLGTITPNLLGRTLTHEHVALDFEHFYRPPPPDFESELKAKISMSTLGYVRLYPYSSKENVRFYDGEALEAAKKDVLLYKKHGGGSIVENSSYGLKRNLEFIVELAKSTGVHFIAGTGHYIHAMQDASHASLTVEQMSDLYSKDIITGLQVNGKVVKCGFIGEVASVYPIHDFEKNAIKAAGEIQEVLGCGVSMHPHRVTKAPFEIMRLYLEAGGRADKCVMSHLDRTIFDIDELLEFAKLGCYIQYDLFGTECSFYQLNTSVDMISDGQRIDNLIKLIKEGLVDKLLMSHDIHTKHRLTSYGGHGYHHIHTNILPRMFDRGVTLEQVEQMTVTNPAKWLAFDP.

Residues His22, His24, Glu169, His201, His230, and Asp298 each contribute to the a divalent metal cation site.

It belongs to the metallo-dependent hydrolases superfamily. Phosphotriesterase family. It depends on a divalent metal cation as a cofactor.

The sequence is that of Phosphotriesterase-related protein from Drosophila melanogaster (Fruit fly).